A 1117-amino-acid polypeptide reads, in one-letter code: Mitochondrial protein cyt-4 (1117 aa).

In terms of domain architecture, RNB spans 561–916 (RQDFYTSTVY…LVHWQIQAAL (356 aa)). The tract at residues 705-730 (VVLEVGTPPSAEDEAPTRKMTKPDEL) is disordered. A compositionally biased stretch (basic and acidic residues) spans 719-730 (APTRKMTKPDEL).

Belongs to the RNR ribonuclease family. Homodimer.

The protein resides in the mitochondrion. In terms of biological role, required for RNA 5'- and 3'-end processing and splicing. May act on the RNA processing enzymes directly, or it may act on other regulatory molecules, which influence the activity or synthesis of these enzymes. The protein is Mitochondrial protein cyt-4 (cyt-4) of Neurospora crassa (strain ATCC 24698 / 74-OR23-1A / CBS 708.71 / DSM 1257 / FGSC 987).